The sequence spans 61 residues: DNA-directed RNA polymerase subunit Rpo6 (61 aa).

Belongs to the archaeal Rpo6/eukaryotic RPB6 RNA polymerase subunit family. Part of the RNA polymerase complex.

It is found in the cytoplasm. It carries out the reaction RNA(n) + a ribonucleoside 5'-triphosphate = RNA(n+1) + diphosphate. In terms of biological role, DNA-dependent RNA polymerase (RNAP) catalyzes the transcription of DNA into RNA using the four ribonucleoside triphosphates as substrates. The protein is DNA-directed RNA polymerase subunit Rpo6 of Thermoplasma acidophilum (strain ATCC 25905 / DSM 1728 / JCM 9062 / NBRC 15155 / AMRC-C165).